We begin with the raw amino-acid sequence, 388 residues long: Myosin light chain kinase family member 4 (388 aa).

The region spanning 106 to 361 (VSKTEILGGG…ASEALKHPWL (256 aa)) is the Protein kinase domain. ATP is bound by residues 112–120 (LGGGRFGQV) and lysine 135. Residue aspartate 227 is the Proton acceptor of the active site.

The protein belongs to the protein kinase superfamily. CAMK Ser/Thr protein kinase family.

It catalyses the reaction L-seryl-[protein] + ATP = O-phospho-L-seryl-[protein] + ADP + H(+). It carries out the reaction L-threonyl-[protein] + ATP = O-phospho-L-threonyl-[protein] + ADP + H(+). This Homo sapiens (Human) protein is Myosin light chain kinase family member 4 (MYLK4).